Here is a 96-residue protein sequence, read N- to C-terminus: Co-chaperonin GroES (96 aa).

It belongs to the GroES chaperonin family. In terms of assembly, heptamer of 7 subunits arranged in a ring. Interacts with the chaperonin GroEL.

It is found in the cytoplasm. Functionally, together with the chaperonin GroEL, plays an essential role in assisting protein folding. The GroEL-GroES system forms a nano-cage that allows encapsulation of the non-native substrate proteins and provides a physical environment optimized to promote and accelerate protein folding. GroES binds to the apical surface of the GroEL ring, thereby capping the opening of the GroEL channel. The chain is Co-chaperonin GroES from Haemophilus influenzae (strain PittEE).